The primary structure comprises 281 residues: Elongation factor Ts (281 aa).

The tract at residues 80–83 (TDFV) is involved in Mg(2+) ion dislocation from EF-Tu.

It belongs to the EF-Ts family.

The protein resides in the cytoplasm. In terms of biological role, associates with the EF-Tu.GDP complex and induces the exchange of GDP to GTP. It remains bound to the aminoacyl-tRNA.EF-Tu.GTP complex up to the GTP hydrolysis stage on the ribosome. This is Elongation factor Ts from Vibrio campbellii (strain ATCC BAA-1116).